The chain runs to 168 residues: Phosphopantetheine adenylyltransferase (168 aa).

Residue Thr-14 participates in substrate binding. Residues 14-15 (TF) and His-22 contribute to the ATP site. Substrate is bound by residues Lys-46, Leu-78, and Arg-92. ATP contacts are provided by residues 93-95 (GLR), Glu-103, and 128-134 (YSFISSS).

The protein belongs to the bacterial CoaD family. As to quaternary structure, homohexamer. It depends on Mg(2+) as a cofactor.

The protein localises to the cytoplasm. It catalyses the reaction (R)-4'-phosphopantetheine + ATP + H(+) = 3'-dephospho-CoA + diphosphate. The protein operates within cofactor biosynthesis; coenzyme A biosynthesis; CoA from (R)-pantothenate: step 4/5. Functionally, reversibly transfers an adenylyl group from ATP to 4'-phosphopantetheine, yielding dephospho-CoA (dPCoA) and pyrophosphate. This chain is Phosphopantetheine adenylyltransferase, found in Xanthomonas campestris pv. campestris (strain B100).